A 335-amino-acid polypeptide reads, in one-letter code: Galactosylgalactosylxylosylprotein 3-beta-glucuronosyltransferase 3 (335 aa).

Residues 1-7 (MKLKLKN) lie on the Cytoplasmic side of the membrane. A helical; Signal-anchor for type II membrane protein membrane pass occupies residues 8–28 (VFLAYFLVSIAGLLYALVQLG). Topologically, residues 29 to 335 (QPCDCLPPLR…GRGSDPAIEV (307 aa)) are lumenal. UDP-alpha-D-glucuronate-binding positions include 82–84 (PTY), aspartate 113, arginine 156, arginine 161, and 194–196 (DDD). Aspartate 196 provides a ligand contact to Mn(2+). Positions 243–252 (WEPSRPFPVD) are interaction with galactose moiety of substrate glycoprotein. Glutamate 281 (proton donor/acceptor) is an active-site residue. Asparagine 300 carries an N-linked (GlcNAc...) asparagine glycan. Position 308-310 (308-310 (HTR)) interacts with UDP-alpha-D-glucuronate. The span at 312–322 (EKPKMKQEEQL) shows a compositional bias: basic and acidic residues. A disordered region spans residues 312-335 (EKPKMKQEEQLQRQGRGSDPAIEV).

The protein belongs to the glycosyltransferase 43 family. In terms of assembly, homodimer; disulfide-linked. Interacts with PXYLP1; the interaction increases the 2-phosphoxylose phosphatase activity of PXYLP1 during completion of linkage region formation in a B3GAT3-mediated manner. It depends on Mn(2+) as a cofactor. N-glycosylated. In terms of tissue distribution, ubiquitous (but weakly expressed in all tissues examined).

It localises to the golgi apparatus membrane. Its subcellular location is the golgi apparatus. The protein localises to the cis-Golgi network. The catalysed reaction is 3-O-(beta-D-galactosyl-(1-&gt;3)-beta-D-galactosyl-(1-&gt;4)-beta-D-xylosyl)-L-seryl-[protein] + UDP-alpha-D-glucuronate = 3-O-(beta-D-GlcA-(1-&gt;3)-beta-D-Gal-(1-&gt;3)-beta-D-Gal-(1-&gt;4)-beta-D-Xyl)-L-seryl-[protein] + UDP + H(+). The protein operates within protein modification; protein glycosylation. Inhibited by EDTA. Functionally, glycosaminoglycans biosynthesis. Involved in forming the linkage tetrasaccharide present in heparan sulfate and chondroitin sulfate. Transfers a glucuronic acid moiety from the uridine diphosphate-glucuronic acid (UDP-GlcUA) to the common linkage region trisaccharide Gal-beta-1,3-Gal-beta-1,4-Xyl covalently bound to a Ser residue at the glycosaminylglycan attachment site of proteoglycans. Can also play a role in the biosynthesis of l2/HNK-1 carbohydrate epitope on glycoproteins. Shows strict specificity for Gal-beta-1,3-Gal-beta-1,4-Xyl, exhibiting negligible incorporation into other galactoside substrates including Galbeta1-3Gal beta1-O-benzyl, Galbeta1-4GlcNAc and Galbeta1-4Glc. Stimulates 2-phosphoxylose phosphatase activity of PXYLP1 in presence of uridine diphosphate-glucuronic acid (UDP-GlcUA) during completion of linkage region formation. The chain is Galactosylgalactosylxylosylprotein 3-beta-glucuronosyltransferase 3 (B3GAT3) from Homo sapiens (Human).